A 61-amino-acid polypeptide reads, in one-letter code: Small ribosomal subunit protein uS14 (61 aa).

Zn(2+) contacts are provided by Cys24, Cys27, Cys40, and Cys43.

It belongs to the universal ribosomal protein uS14 family. Zinc-binding uS14 subfamily. In terms of assembly, part of the 30S ribosomal subunit. Contacts proteins S3 and S10. Zn(2+) is required as a cofactor.

Its function is as follows. Binds 16S rRNA, required for the assembly of 30S particles and may also be responsible for determining the conformation of the 16S rRNA at the A site. In Mycoplasmopsis pulmonis (strain UAB CTIP) (Mycoplasma pulmonis), this protein is Small ribosomal subunit protein uS14.